The primary structure comprises 89 residues: Small ribosomal subunit protein uS15 (89 aa).

This sequence belongs to the universal ribosomal protein uS15 family. Part of the 30S ribosomal subunit. Forms a bridge to the 50S subunit in the 70S ribosome, contacting the 23S rRNA.

Its function is as follows. One of the primary rRNA binding proteins, it binds directly to 16S rRNA where it helps nucleate assembly of the platform of the 30S subunit by binding and bridging several RNA helices of the 16S rRNA. In terms of biological role, forms an intersubunit bridge (bridge B4) with the 23S rRNA of the 50S subunit in the ribosome. In Pseudomonas fluorescens (strain SBW25), this protein is Small ribosomal subunit protein uS15.